The sequence spans 341 residues: MVANPGGGSTDAGGGPVRHIPVLLAEVLAALAPAPGKLILDGTFGAGGYSSAILAAGAEVIALDRDPTAIAAGQAMVAAHGGRFKLVHSQFSHLADHAPQGGLDGVVLDIGVSSMQIDEAERGFSFQKNGPLDMRMSAEGVSAADVVNRAKVADLIRIFHFLGEESQAPRIAHAIEKRRAEKPFETTRDLAGLIELVTPRKMKDKIHPATRVFQALRIFVNDELGELAQALFAAEAALKPGGRLVAVTFHSLEDRIVKKFFSDRAGKASGSRHLPVAHERAATFAAIGKPMVSASEAEAEINPRARSAKLRAGLRTEAAAEAADMSLFGFPNLASLGKLGG.

S-adenosyl-L-methionine is bound by residues 47 to 49, Asp64, Phe91, Asp109, and Gln116; that span reads GGY.

It belongs to the methyltransferase superfamily. RsmH family.

The protein resides in the cytoplasm. It catalyses the reaction cytidine(1402) in 16S rRNA + S-adenosyl-L-methionine = N(4)-methylcytidine(1402) in 16S rRNA + S-adenosyl-L-homocysteine + H(+). Specifically methylates the N4 position of cytidine in position 1402 (C1402) of 16S rRNA. This is Ribosomal RNA small subunit methyltransferase H from Rhizobium leguminosarum bv. trifolii (strain WSM1325).